The sequence spans 272 residues: Undecaprenyl-diphosphatase (272 aa).

7 helical membrane-spanning segments follow: residues 6–26, 45–65, 92–112, 115–135, 189–209, 221–241, and 251–271; these read SLLIAFILGVVEGLTEFLPVS, AKTFEVIIQLGSILAVVVMFW, THILLAMIPAVVLGLIFHDVI, LFYPQNVMYSLVIGGFLLLAA, YAASEFSFILAVPMMMGATVL, ADVPMFAVGFVTAFVVALIAI, and ISFIPFAIYRFIVAGVVYMVF.

It belongs to the UppP family.

It is found in the cell inner membrane. It carries out the reaction di-trans,octa-cis-undecaprenyl diphosphate + H2O = di-trans,octa-cis-undecaprenyl phosphate + phosphate + H(+). Its function is as follows. Catalyzes the dephosphorylation of undecaprenyl diphosphate (UPP). Confers resistance to bacitracin. The polypeptide is Undecaprenyl-diphosphatase (Pectobacterium atrosepticum (strain SCRI 1043 / ATCC BAA-672) (Erwinia carotovora subsp. atroseptica)).